Consider the following 700-residue polypeptide: Beta-galactosidase BgaB (700 aa).

Residues Arg-122 and Asn-160 each contribute to the substrate site. Glu-161 (proton donor) is an active-site residue. Glu-320 functions as the Nucleophile in the catalytic mechanism. Substrate contacts are provided by residues Trp-328 and 368-371 (EAFH).

This sequence belongs to the glycosyl hydrolase 42 family. As to quaternary structure, trimer. Tetramer. Post-translationally, the N-terminus is blocked.

The catalysed reaction is Hydrolysis of terminal non-reducing beta-D-galactose residues in beta-D-galactosides.. Its activity is regulated as follows. Inhibited by high substrate concentrations (100 mg/ml). No effect on activity with various EDTA concentrations (0-1 mM). 20-fold higher activity when cells grown on TOS than when cells grown on galactose, glucose and lactose. Functionally, involved in the hydrolysis of transgalactooligosaccharides (TOS). Highly active towards Gal(beta1-4)Gal and Gal(beta1-4)-Gal-containing oligosaccharides. Low activity towards Gal(beta1-3)Gal, lactose and Gal(beta1-3)GalOMe. No activity towards Gal(beta1-6)Gal, Gal(beta1-4)Man, Gal(alpha1-4)Gal, Gal(alpha1-3)Gal(beta1-4)Gal, lactulose, 3'fucosyllactose, lacto-N-fucopentaose I, lacto-N-fucopentaose II, cellobiose, maltose or sucrose. No transglycosylation activity is found at high substrate concentrations (100 mg/ml) and only low transglycosylation activity at lower substrate concentrations (10 mg/ml). The sequence is that of Beta-galactosidase BgaB (bgaB) from Bifidobacterium adolescentis (strain ATCC 15703 / DSM 20083 / NCTC 11814 / E194a).